A 196-amino-acid chain; its full sequence is Probable calcium-binding protein CML32 (196 aa).

3 EF-hand domains span residues 30-65, 121-156, and 159-194; these read LNAVRLRRVFDLFDRNGDGEITVDELAQALDALGLV, DEEEEMREAFKVFDVDGDGFISASELQEVLKKLGLP, and GSLATVREMICNVDRNSDGRVDFGEFKSMMQGITVW. D43, N45, D47, E49, E54, D134, D136, D138, E145, D172, N174, D176, R178, and E183 together coordinate Ca(2+).

In terms of biological role, potential calcium sensor. The polypeptide is Probable calcium-binding protein CML32 (CML32) (Oryza sativa subsp. japonica (Rice)).